The following is a 674-amino-acid chain: Endopolyphosphatase (674 aa).

The Cytoplasmic portion of the chain corresponds to Met-1–Ser-21. 2 consecutive propeptides (removed in mature form) follow at residues Met-1–Lys-83 and Glu-385–Asp-674. Lys-6 participates in a covalent cross-link: Glycyl lysine isopeptide (Lys-Gly) (interchain with G-Cter in ubiquitin). The chain crosses the membrane as a helical; Signal-anchor for type II membrane protein span at residues Leu-22 to Phe-42. The Vacuolar segment spans residues Gln-43–Asp-674. Residue Asn-58 is glycosylated (N-linked (GlcNAc...) asparagine). The interval Met-384–Thr-403 is disordered. 2 N-linked (GlcNAc...) asparagine glycosylation sites follow: Asn-505 and Asn-511.

Belongs to the endopolyphosphatase PPN1 family. In terms of assembly, homotetramer. Interacts with PPN2. Mn(2+) serves as cofactor. Mg(2+) is required as a cofactor. The cofactor is Co(2+). Requires Zn(2+) as cofactor. In terms of processing, processing by proteases in the vacuole is required for activation. Post-translationally, ubiquitinated. Ubiquitination mediates sorting into internal vesicles in late endosomes. TUL1 and RSP5 are required for ubiquitination. Other cytoplasmic Lys residues than Lys-6 may also be ubiquitinated. N-glycosylated. N-glycosylation is essential for the protease-mediated maturation.

Its subcellular location is the vacuole membrane. It localises to the cytoplasm. It catalyses the reaction [phosphate](n+1) + n H2O = (n+1) phosphate + n H(+). The catalysed reaction is [phosphate](n) + H2O = [phosphate](n-1) + phosphate + H(+). The enzyme catalyses dATP + H2O = dADP + phosphate + H(+). Inhibited by heparin and EDTA. In terms of biological role, catalyzes the hydrolysis of inorganic polyphosphate (polyP) chains of many hundreds of phosphate residues into shorter lengths. Has both exopolyphosphatase and endopolyphosphatase activities at different ratios depending on divalent cations by cleaving phosphate from the chain end and by fragmenting long-chain polymers into shorter ones, respectively. The limited digestion products are 1 and 3 P(i) residues. Also releases phosphate from dATP. dATP phosphohydrolase activity is about 7-fold lower than the exopolyphosphatase activity. This chain is Endopolyphosphatase, found in Saccharomyces cerevisiae (strain ATCC 204508 / S288c) (Baker's yeast).